The following is a 559-amino-acid chain: MSNESIYSVLDLTQVIFEDRYLVKQKLGDGSFGTVYLAQRKEKNGLYETVAVKKLKNSSKPKPKHELLKLRESLALRKISKHPCLIDLLETFMDPYRNIFLVMEFMDCNLFQLFKRRQGRLFTKETAFNILLQIISGIEHIHKHGFMHRDIKPENILVKRISPKPISSRYSIKLGDFGLARPSVSSDPLTEYVSTRWYRAPELLLRSGSYNHSVDLYAFGCIVFEIYSLKPLFPGRNETDQLNRVCEILGNPGIDELDTLHYWSQAKELAKRLGFMLPPTKPYPIQKLLPQNCPEGHAKMIPCLLAWNPDVRPTAKYCKEVFFPLPPSASKSNSVPQKISNPKVEQNLGFPISREDKKSTRRVGWLKKNLSEFVSSVKSVFPDSHGSQPHVKTEKPINAKESTGHLANPIASSNVPAISLKPGELHESVFFSENEQIDYLLTSIDYLPSYKPPSNGSNIAINAFNETVGDRIPSSKDILITEKIPFKKENEIRDSIVPSCSQPDESNKEGVASCLLLQKSGMEMTSVLEYSTPNPAEVQNICNDHAKFETSKSLHLSSP.

The Protein kinase domain maps to tyrosine 21–phenylalanine 323. ATP is bound by residues leucine 27–valine 35 and lysine 53. Aspartate 150 functions as the Proton acceptor in the catalytic mechanism.

It belongs to the protein kinase superfamily. Ser/Thr protein kinase family.

The enzyme catalyses L-seryl-[protein] + ATP = O-phospho-L-seryl-[protein] + ADP + H(+). It catalyses the reaction L-threonyl-[protein] + ATP = O-phospho-L-threonyl-[protein] + ADP + H(+). Protein kinase which is essential for spore formation. This chain is Sporulation protein kinase mde3 (mde3), found in Schizosaccharomyces pombe (strain 972 / ATCC 24843) (Fission yeast).